We begin with the raw amino-acid sequence, 214 residues long: Heat shock protein 26 (214 aa).

The residue at position 2 (Ser-2) is an N-acetylserine. Thr-42 is modified (phosphothreonine). Residues 86–207 enclose the sHSP domain; the sequence is GFPRSVAVPV…KNHVKKIEVS (122 aa). Phosphoserine is present on Ser-90. Phosphothreonine is present on Thr-163. Residues 192 to 214 form a disordered region; it reads KPQKDGKNHVKKIEVSSQESWGN. The span at 193–205 shows a compositional bias: basic and acidic residues; the sequence is PQKDGKNHVKKIE. Ser-208 and Ser-211 each carry phosphoserine.

Belongs to the small heat shock protein (HSP20) family. Present in large complexes.

Its function is as follows. Not known. One of the major polypeptides produced on heat shock. The protein is Heat shock protein 26 (HSP26) of Saccharomyces cerevisiae (strain ATCC 204508 / S288c) (Baker's yeast).